An 81-amino-acid polypeptide reads, in one-letter code: Protein translocase subunit SecE (81 aa).

Residues 50-70 (VAVILMVILVSTVIYFVDQIF) form a helical membrane-spanning segment.

The protein belongs to the SecE/SEC61-gamma family. As to quaternary structure, component of the Sec protein translocase complex. Heterotrimer consisting of SecY, SecE and SecG subunits. The heterotrimers can form oligomers, although 1 heterotrimer is thought to be able to translocate proteins. Interacts with the ribosome. Interacts with SecDF, and other proteins may be involved. Interacts with SecA.

The protein localises to the cell inner membrane. It is found in the cellular thylakoid membrane. Essential subunit of the Sec protein translocation channel SecYEG. Clamps together the 2 halves of SecY. May contact the channel plug during translocation. This chain is Protein translocase subunit SecE, found in Synechocystis sp. (strain ATCC 27184 / PCC 6803 / Kazusa).